We begin with the raw amino-acid sequence, 74 residues long: uncharacterized protein (74 aa).

Residues 54–72 traverse the membrane as a helical segment; it reads LIIPRFLLLIYSVIQCLFL.

The protein localises to the membrane. This is an uncharacterized protein from Saccharomyces cerevisiae (strain ATCC 204508 / S288c) (Baker's yeast).